The chain runs to 82 residues: Delta-actitoxin-Aeq2b 1 (82 aa).

The signal sequence occupies residues 1 to 19 (MNRLMILVFAAVILALASA). The propeptide occupies 20–26 (DEDVDIA). 3 disulfide bridges follow: C32–C79, C34–C69, and C62–C80.

Belongs to the sea anemone sodium channel inhibitory toxin family. Type I subfamily.

It is found in the secreted. The protein resides in the nematocyst. In terms of biological role, binds specifically to voltage-gated sodium channels (Nav), thereby delaying their inactivation during signal transduction. Causes death to crabs. In Actinia equina (Beadlet anemone), this protein is Delta-actitoxin-Aeq2b 1.